A 262-amino-acid chain; its full sequence is Small ribosomal subunit protein uS2 (262 aa).

Positions 224–262 (GKQGQDDAQQETADDNAANETVSEDSLKNLKNSVEGKED) are disordered.

It belongs to the universal ribosomal protein uS2 family.

The chain is Small ribosomal subunit protein uS2 from Limosilactobacillus reuteri (strain DSM 20016) (Lactobacillus reuteri).